A 133-amino-acid polypeptide reads, in one-letter code: Peptide methionine sulfoxide reductase MsrB (133 aa).

In terms of domain architecture, MsrB spans 8–130 (LDVWRELLSD…NSASLRLKPR (123 aa)). Zn(2+) contacts are provided by Cys47, Cys50, Cys96, and Cys99. Cys119 acts as the Nucleophile in catalysis.

It belongs to the MsrB Met sulfoxide reductase family. Zn(2+) is required as a cofactor.

It catalyses the reaction L-methionyl-[protein] + [thioredoxin]-disulfide + H2O = L-methionyl-(R)-S-oxide-[protein] + [thioredoxin]-dithiol. The sequence is that of Peptide methionine sulfoxide reductase MsrB from Azotobacter vinelandii (strain DJ / ATCC BAA-1303).